The following is a 378-amino-acid chain: Heterogeneous nuclear ribonucleoprotein A3 (378 aa).

M1 carries the N-acetylmethionine modification. Positions 1 to 10 (MEVKPPPGRP) are enriched in pro residues. The disordered stretch occupies residues 1–34 (MEVKPPPGRPQPDSGRRRRRRGEEGHDPKEPEQL). Residue K4 forms a Glycyl lysine isopeptide (Lys-Gly) (interchain with G-Cter in SUMO2) linkage. S14 bears the Phosphoserine mark. A compositionally biased stretch (basic and acidic residues) spans 21–34 (RGEEGHDPKEPEQL). The 84-residue stretch at 35-118 (RKLFIGGLSF…RAVSREDSVK (84 aa)) folds into the RRM 1 domain. A Glycyl lysine isopeptide (Lys-Gly) (interchain with G-Cter in SUMO2) cross-link involves residue K36. S43 is subject to Phosphoserine. Residue R52 is modified to Dimethylated arginine; alternate. Omega-N-methylarginine; alternate is present on R52. An Omega-N-methylarginine modification is found at R76. Phosphoserine occurs at positions 112 and 116. A Glycyl lysine isopeptide (Lys-Gly) (interchain with G-Cter in SUMO2) cross-link involves residue K118. Phosphothreonine is present on T124. Residues 126 to 205 (KKIFVGGIKE…CEVKKALSKQ (80 aa)) enclose the RRM 2 domain. K134 is subject to N6-acetyllysine; alternate. K134 is covalently cross-linked (Glycyl lysine isopeptide (Lys-Gly) (interchain with G-Cter in SUMO2); alternate). Residues K151 and K182 each participate in a glycyl lysine isopeptide (Lys-Gly) (interchain with G-Cter in SUMO2) cross-link. Residues 204-225 (KQEMQSAGSQRGRGGGSGNFMG) form a disordered region. An omega-N-methylarginine; alternate mark is found at R214, R216, R226, R239, and R246. An asymmetric dimethylarginine; alternate mark is found at R214, R216, R226, R239, and R246. The span at 214–225 (RGRGGGSGNFMG) shows a compositional bias: gly residues. R257 carries the post-translational modification Omega-N-methylarginine. R286 is modified (asymmetric dimethylarginine). The interval 336 to 378 (SGQQQSNYGPMKGGSFGGRSSGSPYGGGYGSGGGSGGYGSRRF) is disordered. Positions 346–378 (MKGGSFGGRSSGSPYGGGYGSGGGSGGYGSRRF) are enriched in gly residues. S350 bears the Phosphoserine mark. R354 is modified (omega-N-methylarginine). At S358 the chain carries Phosphoserine. A phosphotyrosine mark is found at Y360 and Y364. Phosphoserine is present on residues S366 and S370. Y373 carries the phosphotyrosine modification. Position 375 is a phosphoserine (S375).

In terms of assembly, identified in the spliceosome C complex.

It is found in the nucleus. In terms of biological role, plays a role in cytoplasmic trafficking of RNA. Binds to the cis-acting response element, A2RE. May be involved in pre-mRNA splicing. This is Heterogeneous nuclear ribonucleoprotein A3 (HNRNPA3) from Homo sapiens (Human).